We begin with the raw amino-acid sequence, 84 residues long: Beta-cardiotoxin CTX14 (84 aa).

The signal sequence occupies residues 1 to 21; that stretch reads MKTLLLTLVVVTIVCLDLGYT. Intrachain disulfides connect Cys24/Cys43, Cys36/Cys61, Cys65/Cys76, and Cys77/Cys82.

This sequence belongs to the three-finger toxin family. Short-chain subfamily. Aminergic toxin sub-subfamily. As to expression, expressed by the venom gland.

It localises to the secreted. Functionally, acts as a beta-blocker by binding to beta-1 and beta-2 adrenergic receptors (ADRB1 and ADRB2). It dose-dependently decreases the heart rate (bradycardia), whereas conventional cardiotoxins increases it. At 100 mg/kg, intraperitoneal injection into mice provokes labored breathing, impaired locomotion, lack of response to external stimuli, and death (after 30 minutes). This chain is Beta-cardiotoxin CTX14, found in Ophiophagus hannah (King cobra).